The sequence spans 530 residues: AAA-ATPase At3g28510 (530 aa).

A helical transmembrane segment spans residues 5 to 25 (GAIWGITGTTVTSFMFFWAIY). 250-257 (GPPGTGKS) serves as a coordination point for ATP. Disordered stretches follow at residues 312–339 (QRKK…KVDD) and 463–530 (KARK…KSDS). Basic and acidic residues-rich tracts occupy residues 326–339 (EEKK…KVDD) and 463–511 (KARK…KEEN). The segment covering 512 to 523 (GNVSQQNGNSID) has biased composition (polar residues).

The protein belongs to the AAA ATPase family. BCS1 subfamily. Mg(2+) serves as cofactor.

It is found in the membrane. It carries out the reaction ATP + H2O = ADP + phosphate + H(+). This is AAA-ATPase At3g28510 from Arabidopsis thaliana (Mouse-ear cress).